A 302-amino-acid polypeptide reads, in one-letter code: Probable 5-dehydro-4-deoxyglucarate dehydratase (302 aa).

It belongs to the DapA family.

The enzyme catalyses 5-dehydro-4-deoxy-D-glucarate + H(+) = 2,5-dioxopentanoate + CO2 + H2O. The protein operates within carbohydrate acid metabolism; D-glucarate degradation; 2,5-dioxopentanoate from D-glucarate: step 2/2. The chain is Probable 5-dehydro-4-deoxyglucarate dehydratase from Rhizobium rhizogenes (strain K84 / ATCC BAA-868) (Agrobacterium radiobacter).